Reading from the N-terminus, the 1325-residue chain is Nephrocystin-3 (1325 aa).

Residues 1 to 20 (MGTASSLVSPTGGEVIEDTY) form a disordered region. G2 carries the N-myristoyl glycine lipid modification. Positions 107-203 (SMGRREAKLD…QRLQAQGIQV (97 aa)) form a coiled coil. 11 TPR repeats span residues 467–500 (TPEE…AHEL), 881–914 (CLLN…KGAM), 916–937 (TEYF…MLCL), 938–971 (ADLY…RETA), 980–1013 (AQSL…SENA), 1022–1055 (AREL…RQQA), 1088–1121 (ARTL…RERV), 1130–1163 (AQSL…RRRA), 1172–1205 (AYTV…RQKS), 1214–1247 (ATAL…YEDS), and 1256–1289 (GETL…KEAE). The interval 1293-1325 (LGGKAPSRQSSSGDTFLFKTTHSPNVFLPQGQS) is disordered. Positions 1299-1325 (SRQSSSGDTFLFKTTHSPNVFLPQGQS) are enriched in polar residues.

As to quaternary structure, interacts with NPHP1 and INVS/NPHP2. Interacts (when myristoylated) with UNC119 and UNC119B; interaction is required for localization to cilium. Interacts with CEP164. Component of a complex containing at least ANKS6, INVS, NEK8 and NPHP3. ANKS6 may organize complex assembly by linking INVS and NPHP3 to NEK8 and INVS may target the complex to the proximal ciliary axoneme.

It is found in the cell projection. The protein localises to the cilium. Functionally, required for normal ciliary development and function. Inhibits disheveled-1-induced canonical Wnt-signaling activity and may also play a role in the control of non-canonical Wnt signaling that regulates planar cell polarity. Probably acts as a molecular switch between different Wnt signaling pathways. Required for proper convergent extension cell movements. The polypeptide is Nephrocystin-3 (Nphp3) (Mus musculus (Mouse)).